A 297-amino-acid chain; its full sequence is 4-hydroxy-tetrahydrodipicolinate synthase (297 aa).

Pyruvate is bound at residue Thr-50. The active-site Proton donor/acceptor is Tyr-138. Catalysis depends on Lys-166, which acts as the Schiff-base intermediate with substrate. Position 208 (Ile-208) interacts with pyruvate.

Belongs to the DapA family. As to quaternary structure, homotetramer; dimer of dimers.

The protein localises to the cytoplasm. The catalysed reaction is L-aspartate 4-semialdehyde + pyruvate = (2S,4S)-4-hydroxy-2,3,4,5-tetrahydrodipicolinate + H2O + H(+). The protein operates within amino-acid biosynthesis; L-lysine biosynthesis via DAP pathway; (S)-tetrahydrodipicolinate from L-aspartate: step 3/4. Functionally, catalyzes the condensation of (S)-aspartate-beta-semialdehyde [(S)-ASA] and pyruvate to 4-hydroxy-tetrahydrodipicolinate (HTPA). The sequence is that of 4-hydroxy-tetrahydrodipicolinate synthase from Haemophilus ducreyi (strain 35000HP / ATCC 700724).